The sequence spans 362 residues: Probable S-adenosylmethionine-dependent methyltransferase At5g37990 (362 aa).

The S-adenosyl-L-homocysteine site is built by Y19, C66, N71, D107, S136, and F137. Mg(2+) contacts are provided by N175, E261, and F263.

Belongs to the methyltransferase superfamily. Type-7 methyltransferase family. Homodimer. The cofactor is Mg(2+).

In Arabidopsis thaliana (Mouse-ear cress), this protein is Probable S-adenosylmethionine-dependent methyltransferase At5g37990.